Consider the following 281-residue polypeptide: 2,3,4,5-tetrahydropyridine-2,6-dicarboxylate N-succinyltransferase (281 aa).

Residues Arg-108 and Asp-145 each coordinate substrate.

It belongs to the transferase hexapeptide repeat family. Homotrimer.

The protein localises to the cytoplasm. The catalysed reaction is (S)-2,3,4,5-tetrahydrodipicolinate + succinyl-CoA + H2O = (S)-2-succinylamino-6-oxoheptanedioate + CoA. It functions in the pathway amino-acid biosynthesis; L-lysine biosynthesis via DAP pathway; LL-2,6-diaminopimelate from (S)-tetrahydrodipicolinate (succinylase route): step 1/3. This Nitrobacter hamburgensis (strain DSM 10229 / NCIMB 13809 / X14) protein is 2,3,4,5-tetrahydropyridine-2,6-dicarboxylate N-succinyltransferase.